The following is a 572-amino-acid chain: SHUGOSHIN 1 (572 aa).

Residues 59 to 110 (KHQQQAILISSKENAENLQKENTKLMKVVMERDGIKSDLKKLRIEFQKVQEQ) adopt a coiled-coil conformation. 4 disordered regions span residues 185–221 (DADH…PANS), 244–285 (KLVS…QTET), 333–352 (ARLK…SIET), and 484–572 (SRRQ…RGGF). Residues 192 to 201 (SGSSNANSLQ) show a composition bias toward polar residues. Composition is skewed to basic and acidic residues over residues 244 to 257 (KLVS…ENHI), 336 to 352 (KSQE…SIET), 523 to 542 (ELKR…EMRK), and 552 to 572 (AAEK…RGGF).

This sequence belongs to the shugoshin family.

Protects sister chromatid centromere cohesion in meiosis I but not through the protection of the cohesin SYN1. Required with SGO2 for full protection of centromeric cohesion during anaphase I. Required to prevent precocious release of pericentromeric cohesins during meiosis. Not necessary for the maintenance of the synaptonemal complex (SC). Not required for monopolar spindle orientation in meiosis I. This is SHUGOSHIN 1 from Arabidopsis thaliana (Mouse-ear cress).